The primary structure comprises 609 residues: Nuclear factor 7, brain (609 aa).

A Tudor-knot domain is found at 21–75 (NVGSTYPCKRSDGSQHDAEIVKVRYNKQAGREEYYAHYVGLNRRQNEWVDKSRLV). Residues 74 to 84 (LVLTKPPKEGE) are compositionally biased toward basic and acidic residues. Positions 74 to 129 (LVLTKPPKEGETNGTDQEVTDTAEQPDSKTPQKRKIEEPEPEPKKAKVEEKDASKN) are disordered. A compositionally biased stretch (polar residues) spans 85–102 (TNGTDQEVTDTAEQPDSK). The residue at position 103 (Thr103) is a Phosphothreonine; by CDK1. Over residues 107–127 (RKIEEPEPEPKKAKVEEKDAS) the composition is skewed to basic and acidic residues. The RING-type zinc-finger motif lies at 145 to 185 (CPLCVELFKDPVMVACGHNFCRSCIDKAWEGQSSFACPECR). A B box-type zinc finger spans residues 219 to 260 (RPLEKCSEHDERLKLYCKDDGTLSCVICRDSLKHASHNFLPI). Residues Cys224, His227, Cys246, and His252 each coordinate Zn(2+). A coiled-coil region spans residues 278-371 (LEASLKVTEQ…SLAKERMEDT (94 aa)). The B30.2/SPRY domain maps to 413–609 (GPIQYIMWKE…VDPLRFVHNK (197 aa)).

Monomer. Post-translationally, threonine (predominantly) and serine residues are phosphorylated during oocyte maturation, when CDK1 is active. At the neurula stage, high expression in dorsal embryo region including neural folds and somites. Also high expression in adult brain (CNS) and low expression in oocytes.

Its subcellular location is the nucleus. In terms of biological role, transcription factor that determines dorsal-ventral body axis. This is Nuclear factor 7, brain from Xenopus laevis (African clawed frog).